The following is a 93-amino-acid chain: Small ribosomal subunit protein bS20c (93 aa).

It belongs to the bacterial ribosomal protein bS20 family.

Its subcellular location is the plastid. The protein resides in the chloroplast. Binds directly to 16S ribosomal RNA. This chain is Small ribosomal subunit protein bS20c, found in Phaeodactylum tricornutum (strain CCAP 1055/1).